The chain runs to 528 residues: Phosphoenolpyruvate carboxykinase (ATP) (528 aa).

Residues Arg-56, Tyr-192, and Lys-198 each contribute to the substrate site. ATP contacts are provided by residues Lys-198, His-217, and 233 to 241 (GLSGTGKTT). Positions 198 and 217 each coordinate Mn(2+). Asp-254 is a binding site for Mn(2+). Residues Glu-282, Arg-319, and Thr-444 each contribute to the ATP site. Arg-319 is a binding site for substrate.

It belongs to the phosphoenolpyruvate carboxykinase (ATP) family. Requires Mn(2+) as cofactor.

It localises to the cytoplasm. The catalysed reaction is oxaloacetate + ATP = phosphoenolpyruvate + ADP + CO2. It participates in carbohydrate biosynthesis; gluconeogenesis. Its function is as follows. Involved in the gluconeogenesis. Catalyzes the conversion of oxaloacetate (OAA) to phosphoenolpyruvate (PEP) through direct phosphoryl transfer between the nucleoside triphosphate and OAA. The protein is Phosphoenolpyruvate carboxykinase (ATP) of Geobacillus kaustophilus (strain HTA426).